Here is a 412-residue protein sequence, read N- to C-terminus: 1-deoxy-D-xylulose 5-phosphate reductoisomerase (412 aa).

Residues threonine 5, glycine 6, serine 7, isoleucine 8, glycine 31, arginine 32, asparagine 33, and asparagine 125 each contribute to the NADPH site. Lysine 126 contributes to the 1-deoxy-D-xylulose 5-phosphate binding site. Glutamate 127 contributes to the NADPH binding site. Aspartate 151 is a Mn(2+) binding site. 1-deoxy-D-xylulose 5-phosphate is bound by residues serine 152, glutamate 153, serine 189, and histidine 212. Residue glutamate 153 participates in Mn(2+) binding. Glycine 218 contacts NADPH. 1-deoxy-D-xylulose 5-phosphate is bound by residues serine 225, asparagine 230, lysine 231, and glutamate 234. Glutamate 234 is a Mn(2+) binding site.

Belongs to the DXR family. Requires Mg(2+) as cofactor. The cofactor is Mn(2+).

It catalyses the reaction 2-C-methyl-D-erythritol 4-phosphate + NADP(+) = 1-deoxy-D-xylulose 5-phosphate + NADPH + H(+). It participates in isoprenoid biosynthesis; isopentenyl diphosphate biosynthesis via DXP pathway; isopentenyl diphosphate from 1-deoxy-D-xylulose 5-phosphate: step 1/6. Catalyzes the NADPH-dependent rearrangement and reduction of 1-deoxy-D-xylulose-5-phosphate (DXP) to 2-C-methyl-D-erythritol 4-phosphate (MEP). This chain is 1-deoxy-D-xylulose 5-phosphate reductoisomerase, found in Prochlorococcus marinus (strain SARG / CCMP1375 / SS120).